Here is a 293-residue protein sequence, read N- to C-terminus: Deubiquitinase OTUD6B (293 aa).

An N-acetylmethionine modification is found at Met1. Residues 147–284 (LEIKQIPSDG…GEHYNSVTRL (138 aa)) form the OTU domain. The tract at residues 152–158 (IPSDGHC) is cys-loop. Asp155 is an active-site residue. The active-site Nucleophile is Cys158. The interval 219–229 (IVNTAAWGGQL) is variable-loop. The his-loop stretch occupies residues 267 to 277 (YMRHAYGLGEH). Residue His277 is part of the active site.

As to quaternary structure, interacts with the eukaryotic translation initiation factor 4F complex.

The enzyme catalyses Thiol-dependent hydrolysis of ester, thioester, amide, peptide and isopeptide bonds formed by the C-terminal Gly of ubiquitin (a 76-residue protein attached to proteins as an intracellular targeting signal).. Functionally, deubiquitinating enzyme that may play a role in the ubiquitin-dependent regulation of protein synthesis, downstream of mTORC1. May associate with the protein synthesis initiation complex and modify its ubiquitination to repress translation. May also repress DNA synthesis and modify different cellular targets thereby regulating cell growth and proliferation. May also play a role in proteasome assembly and function. Stimulates protein synthesis. Influences the expression of CCND1/cyclin D1 by promoting its translation and regulates MYC/c-Myc protein stability. This is Deubiquitinase OTUD6B from Homo sapiens (Human).